The chain runs to 150 residues: Ribonuclease P protein subunit p21 (150 aa).

A2 bears the N-acetylalanine mark. The Zn(2+) site is built by C62, C65, C92, and C95. The disordered stretch occupies residues 121-150 (QADINPSEPLPNIADLPKENIQTQALNTSE). The segment covering 140 to 150 (NIQTQALNTSE) has biased composition (polar residues).

Belongs to the eukaryotic/archaeal RNase P protein component 4 family. As to quaternary structure, RNase P consists of a catalytic RNA moiety and about 10 protein subunits; POP1, POP4, POP5, POP7, RPP14, RPP21, RPP25, RPP30, RPP38 and RPP40. Within the RNase P complex, POP1, POP7 and RPP25 form the 'finger' subcomplex, POP5, RPP14, RPP40 and homodimeric RPP30 form the 'palm' subcomplex, and RPP21, POP4 and RPP38 form the 'wrist' subcomplex. All subunits of the RNase P complex interact with the catalytic RNA.

Its subcellular location is the nucleus. The protein resides in the nucleolus. Its function is as follows. Component of ribonuclease P, a ribonucleoprotein complex that generates mature tRNA molecules by cleaving their 5'-ends. The protein is Ribonuclease P protein subunit p21 (Rpp21) of Mus musculus (Mouse).